A 719-amino-acid chain; its full sequence is Protein ENHANCED DISEASE RESISTANCE 2-like (719 aa).

Positions 3-110 constitute a PH domain; the sequence is KVVYEGWMVR…WKEKIECVID (108 aa). Residues 134–173 form a disordered region; that stretch reads AGRTASSSDHESPFSALEDENDSQRDLLRRTTIGNGPPES. Residues 180–392 form the START domain; the sequence is EFDAELSNQS…VSGLREWFSQ (213 aa). The disordered stretch occupies residues 414 to 478; sequence ALGKGGKHHH…ETDAKKTEEP (65 aa). The span at 426–439 shows a compositional bias: polar residues; it reads SLSIDQTNGASRNS. A compositionally biased stretch (acidic residues) spans 442-461; it reads MDEDSDDDDEFQIPDSEPEP. Residues 462-477 show a composition bias toward basic and acidic residues; the sequence is ETSKQDQETDAKKTEE. Residues 665 to 685 form a helical membrane-spanning segment; it reads GVLGLVIGVITSLVVEMAFLV.

The protein resides in the endoplasmic reticulum membrane. It localises to the cell membrane. It is found in the endosome membrane. In terms of biological role, binds to phosphatidylinositol-4-phosphate (PtdIns(4)P). May regulate the salicylic acid- (SA-) mediated resistance to pathogens. The sequence is that of Protein ENHANCED DISEASE RESISTANCE 2-like (EDR2L) from Arabidopsis thaliana (Mouse-ear cress).